Here is a 91-residue protein sequence, read N- to C-terminus: UPF0250 protein PSEEN4821 (91 aa).

This sequence belongs to the UPF0250 family.

In Pseudomonas entomophila (strain L48), this protein is UPF0250 protein PSEEN4821.